The sequence spans 202 residues: Josephin-1 (202 aa).

Ser-15 carries the phosphoserine modification. The 180-residue stretch at 23 to 202 (PPQIYHEKQR…EAHQSWRTDV (180 aa)) folds into the Josephin domain. Residue Cys-36 is the Nucleophile of the active site. The active-site Proton acceptor is His-139.

Interacts with beta-actin/ACTB. In terms of processing, monoubiquitinated. Ubiquitination activates deubiquitination activity in vitro.

Its subcellular location is the cell membrane. It is found in the cytoplasm. The catalysed reaction is Thiol-dependent hydrolysis of ester, thioester, amide, peptide and isopeptide bonds formed by the C-terminal Gly of ubiquitin (a 76-residue protein attached to proteins as an intracellular targeting signal).. Its function is as follows. Deubiquitinates monoubiquitinated probes (in vitro). When ubiquitinated, cleaves 'Lys-63'-linked and 'Lys-48'-linked poly-ubiquitin chains (in vitro), hence may act as a deubiquitinating enzyme. May increase macropinocytosis and suppress clathrin- and caveolae-mediated endocytosis. May enhance membrane dynamics and cell motility independently of its catalytic activity. In Pongo abelii (Sumatran orangutan), this protein is Josephin-1 (JOSD1).